The primary structure comprises 252 residues: Hydroxyacylglutathione hydrolase (252 aa).

Zn(2+) is bound by residues H54, H56, D58, H59, H111, D130, and H170.

This sequence belongs to the metallo-beta-lactamase superfamily. Glyoxalase II family. In terms of assembly, monomer. It depends on Zn(2+) as a cofactor.

It carries out the reaction an S-(2-hydroxyacyl)glutathione + H2O = a 2-hydroxy carboxylate + glutathione + H(+). It participates in secondary metabolite metabolism; methylglyoxal degradation; (R)-lactate from methylglyoxal: step 2/2. Functionally, thiolesterase that catalyzes the hydrolysis of S-D-lactoyl-glutathione to form glutathione and D-lactic acid. The chain is Hydroxyacylglutathione hydrolase from Francisella tularensis subsp. tularensis (strain FSC 198).